Reading from the N-terminus, the 811-residue chain is Metal transporter cnnm-1 (811 aa).

The signal sequence occupies residues 1-24 (MSASCLRLLTLSLFILGQCNVTAA). N-linked (GlcNAc...) asparagine glycosylation is found at asparagine 20, asparagine 49, asparagine 61, and asparagine 122. The Extracellular segment spans residues 25 to 204 (QNGVDDEVTT…KEYFLPLPLQ (180 aa)). A CNNM transmembrane domain is found at 197–376 (YFLPLPLQIA…TDNGQVSNEL (180 aa)). Residues 205-225 (IACIGFLLCLSALFSGLTLGL) form a helical membrane-spanning segment. At 226 to 259 (MSLTPQELELVIKSGAIKEQKCAAKILPVRKKGN) the chain is on the cytoplasmic side. A helical transmembrane segment spans residues 260-280 (LLLCSLLLGNVIVNSAISILM). Residues 281 to 284 (GELT) lie on the Extracellular side of the membrane. A helical transmembrane segment spans residues 285 to 305 (TGIYALIGSTMGIVIFGEILP). At 306-315 (QSICVKKGLE) the chain is on the cytoplasmic side. A helical membrane pass occupies residues 316–336 (VGAHTISITQLFIFLTFPIAW). Topologically, residues 337 to 811 (PVSKLLDCLL…EEEMALLDQP (475 aa)) are extracellular. 2 CBS domains span residues 394-456 (MTKI…NFTV) and 462-530 (YHKH…INDE). N-linked (GlcNAc...) asparagine glycosylation is found at asparagine 435 and asparagine 453. The segment at 741-760 (DVSHNSSAHNSNLSLVEKPG) is disordered. The span at 743-755 (SHNSSAHNSNLSL) shows a compositional bias: low complexity. Residues asparagine 745 and asparagine 752 are each glycosylated (N-linked (GlcNAc...) asparagine).

Belongs to the ACDP family. Highly expressed in the intestine and in neurons, but it is also expressed in a variety of tissues including the pharynx, hypodermis, rectum and in muscles.

It is found in the basolateral cell membrane. In terms of biological role, probable metal transporter. Probably acts redundantly with the other metal transport proteins cnnm-2, cnnm-3, cnnm-4 and cnnm-5 to regulate Mg(2+) homeostasis. Promotes postembryonic gonad development by regulating Mg(2+) levels, probably via AMPK signaling. The chain is Metal transporter cnnm-1 from Caenorhabditis elegans.